The primary structure comprises 409 residues: Testis-expressed protein 13A (409 aa).

Positions 92–408 (WLHGFAKLHK…CGKGIWLQKP (317 aa)) are required for repression of transcription. Positions 347–374 (GGPHRIDHQEHPRDRRYSEPHQQRPPVY) are disordered. Over residues 348 to 368 (GPHRIDHQEHPRDRRYSEPHQ) the composition is skewed to basic and acidic residues. Residues 376-400 (RPGDWDCPWCNAVNFSRRDTCFDCG) form a RanBP2-type zinc finger. The Zn(2+) site is built by Cys382, Cys385, Cys396, and Cys399.

The protein belongs to the TEX13 family. Interacts with CNOT1; the interaction may inhibit CNOT1 binding to mRNA and subsequently CNOT1-mediated mRNA degradation. Testis specific.

Its function is as follows. Binds to ssRNA containing the consensus sequence 5'-AGGUAA-3'. Plays a role in transcriptional repression. Required for rapid sperm motility and timely degradation of mRNA via its interaction with CNOT1. In Homo sapiens (Human), this protein is Testis-expressed protein 13A.